The sequence spans 189 residues: HGPRTase-like protein 2 (189 aa).

This sequence belongs to the purine/pyrimidine phosphoribosyltransferase family. Archaeal HPRT subfamily.

May catalyze a purine salvage reaction, the substrate is unknown. The protein is HGPRTase-like protein 2 of Haloarcula marismortui (strain ATCC 43049 / DSM 3752 / JCM 8966 / VKM B-1809) (Halobacterium marismortui).